The chain runs to 197 residues: Phosphoheptose isomerase (197 aa).

One can recognise an SIS domain in the interval 34–196; that stretch reads MVHCLLGGNK…DRTLFPQDEQ (163 aa). Residue 49 to 51 participates in substrate binding; it reads NGG. Histidine 58 and glutamate 62 together coordinate Zn(2+). Residues glutamate 62, 91–92, 117–119, serine 122, and glutamine 172 each bind substrate; these read ND and STS. Zn(2+) is bound by residues glutamine 172 and histidine 180.

It belongs to the SIS family. GmhA subfamily. In terms of assembly, homotetramer. Zn(2+) is required as a cofactor.

Its subcellular location is the cytoplasm. It catalyses the reaction 2 D-sedoheptulose 7-phosphate = D-glycero-alpha-D-manno-heptose 7-phosphate + D-glycero-beta-D-manno-heptose 7-phosphate. It functions in the pathway carbohydrate biosynthesis; D-glycero-D-manno-heptose 7-phosphate biosynthesis; D-glycero-alpha-D-manno-heptose 7-phosphate and D-glycero-beta-D-manno-heptose 7-phosphate from sedoheptulose 7-phosphate: step 1/1. Its function is as follows. Catalyzes the isomerization of sedoheptulose 7-phosphate in D-glycero-D-manno-heptose 7-phosphate. The protein is Phosphoheptose isomerase of Shewanella sediminis (strain HAW-EB3).